Here is a 126-residue protein sequence, read N- to C-terminus: Small ribosomal subunit protein uS13 (126 aa).

Positions 95–126 are disordered; the sequence is GLPVRGQRTRTNARTRKGPRKTVAGKKKAPRK.

Belongs to the universal ribosomal protein uS13 family. As to quaternary structure, part of the 30S ribosomal subunit. Forms a loose heterodimer with protein S19. Forms two bridges to the 50S subunit in the 70S ribosome.

Located at the top of the head of the 30S subunit, it contacts several helices of the 16S rRNA. In the 70S ribosome it contacts the 23S rRNA (bridge B1a) and protein L5 of the 50S subunit (bridge B1b), connecting the 2 subunits; these bridges are implicated in subunit movement. Contacts the tRNAs in the A and P-sites. The protein is Small ribosomal subunit protein uS13 (rpsM) of Thermus thermophilus (strain ATCC BAA-163 / DSM 7039 / HB27).